The following is a 208-amino-acid chain: Dephospho-CoA kinase (208 aa).

Positions 11–207 constitute a DPCK domain; the sequence is VIGLTGGIAS…EYYLELAQHD (197 aa). 19-24 is a binding site for ATP; it reads ASGKSA.

Belongs to the CoaE family.

It is found in the cytoplasm. It catalyses the reaction 3'-dephospho-CoA + ATP = ADP + CoA + H(+). Its pathway is cofactor biosynthesis; coenzyme A biosynthesis; CoA from (R)-pantothenate: step 5/5. Functionally, catalyzes the phosphorylation of the 3'-hydroxyl group of dephosphocoenzyme A to form coenzyme A. The chain is Dephospho-CoA kinase from Hahella chejuensis (strain KCTC 2396).